The primary structure comprises 734 residues: DNA replication licensing factor MCM5 (734 aa).

At S2 the chain carries N-acetylserine. The MCM domain maps to 331–537 (IYELISKSIA…RDVMLAKHVI (207 aa)). R371 contributes to the ADP binding site. Residues K392 and K396 each carry the N6-acetyllysine modification. Residues 512-515 (SRFD) carry the Arginine finger motif. Residue S605 is modified to Phosphoserine.

This sequence belongs to the MCM family. Component of the MCM2-7 complex. The complex forms a toroidal hexameric ring with the proposed subunit order MCM2-MCM6-MCM4-MCM7-MCM3-MCM5. Component of the CMG helicase complex, a hexameric ring of related MCM2-7 subunits stabilized by CDC45 and the tetrameric GINS complex. Interacts with ANKRD17. Interacts with MCMBP. Interacts with TONSL; the interaction is direct.

Its subcellular location is the nucleus. It localises to the chromosome. The protein resides in the cytoplasm. The protein localises to the cytosol. It catalyses the reaction ATP + H2O = ADP + phosphate + H(+). Acts as a component of the MCM2-7 complex (MCM complex) which is the replicative helicase essential for 'once per cell cycle' DNA replication initiation and elongation in eukaryotic cells. Core component of CDC45-MCM-GINS (CMG) helicase, the molecular machine that unwinds template DNA during replication, and around which the replisome is built. The active ATPase sites in the MCM2-7 ring are formed through the interaction surfaces of two neighboring subunits such that a critical structure of a conserved arginine finger motif is provided in trans relative to the ATP-binding site of the Walker A box of the adjacent subunit. The six ATPase active sites, however, are likely to contribute differentially to the complex helicase activity. The sequence is that of DNA replication licensing factor MCM5 from Bos taurus (Bovine).